The primary structure comprises 102 residues: MTGSDLIGIMILAAGLFAVGVFGVLARRGMLFQLVALEVALSGPALGFIAAGAYHADPEGQGMFILVLTLAAAEVAVGLALFLRLRRLTGTDDSDAISGLKG.

3 consecutive transmembrane segments (helical) span residues 6–26 (LIGI…GVLA), 30–50 (MLFQ…GFIA), and 63–83 (MFIL…ALFL).

The protein belongs to the complex I subunit 4L family. As to quaternary structure, NDH-1 is composed of 14 different subunits. Subunits NuoA, H, J, K, L, M, N constitute the membrane sector of the complex.

The protein resides in the cell inner membrane. The enzyme catalyses a quinone + NADH + 5 H(+)(in) = a quinol + NAD(+) + 4 H(+)(out). Its function is as follows. NDH-1 shuttles electrons from NADH, via FMN and iron-sulfur (Fe-S) centers, to quinones in the respiratory chain. The immediate electron acceptor for the enzyme in this species is believed to be ubiquinone. Couples the redox reaction to proton translocation (for every two electrons transferred, four hydrogen ions are translocated across the cytoplasmic membrane), and thus conserves the redox energy in a proton gradient. This Rhodopseudomonas palustris (strain TIE-1) protein is NADH-quinone oxidoreductase subunit K.